Here is a 354-residue protein sequence, read N- to C-terminus: Methionine import ATP-binding protein MetN (354 aa).

The ABC transporter domain occupies 8-250 (LDHIDITFRQ…PKEALTQEFI (243 aa)). 42 to 49 (GYSGAGKS) serves as a coordination point for ATP.

The protein belongs to the ABC transporter superfamily. Methionine importer (TC 3.A.1.24) family. In terms of assembly, the complex is composed of two ATP-binding proteins (MetN), two transmembrane proteins (MetI) and a solute-binding protein (MetQ).

The protein resides in the cell membrane. The enzyme catalyses L-methionine(out) + ATP + H2O = L-methionine(in) + ADP + phosphate + H(+). The catalysed reaction is D-methionine(out) + ATP + H2O = D-methionine(in) + ADP + phosphate + H(+). Its function is as follows. Part of the ABC transporter complex MetNIQ involved in methionine import. Responsible for energy coupling to the transport system. The sequence is that of Methionine import ATP-binding protein MetN from Streptococcus pyogenes serotype M3 (strain ATCC BAA-595 / MGAS315).